The following is a 220-amino-acid chain: Ribosomal RNA large subunit methyltransferase E (220 aa).

S-adenosyl-L-methionine is bound by residues glycine 60, tryptophan 62, aspartate 92, aspartate 108, and aspartate 133. The active-site Proton acceptor is the lysine 173. The disordered stretch occupies residues 195–220; sequence APRKPKASRDKSSETFILGRHLKQPR.

It belongs to the class I-like SAM-binding methyltransferase superfamily. RNA methyltransferase RlmE family.

The protein localises to the cytoplasm. The catalysed reaction is uridine(2552) in 23S rRNA + S-adenosyl-L-methionine = 2'-O-methyluridine(2552) in 23S rRNA + S-adenosyl-L-homocysteine + H(+). Its function is as follows. Specifically methylates the uridine in position 2552 of 23S rRNA at the 2'-O position of the ribose in the fully assembled 50S ribosomal subunit. This is Ribosomal RNA large subunit methyltransferase E from Burkholderia pseudomallei (strain 1710b).